We begin with the raw amino-acid sequence, 350 residues long: Leucine-rich repeat-containing protein 23 (350 aa).

The span at 1-54 shows a compositional bias: acidic residues; it reads MEDETLEDGPEEEEEDEEEGTAEETNQDVTERDEEEEAEKDEEEDKEEEEEAEK. Residues 1 to 64 form a disordered region; it reads MEDETLEDGP…EEPPPHMPLS (64 aa). 8 LRR repeats span residues 107 to 128, 129 to 150, 151 to 171, 172 to 193, 196 to 216, 217 to 238, 239 to 260, and 262 to 283; these read HLRY…GALT, HLLS…GELP, YLQV…FGHP, RLET…ECSN, SLHT…LNLP, SLRE…EALV, NLTT…SEHL, and ALQY…QKLY. The region spanning 296–334 is the LRRCT domain; sequence NPCEEEEGYRMETLIALPQLERLDKDFFEEEEKREAAET. The stretch at 314 to 344 forms a coiled coil; it reads QLERLDKDFFEEEEKREAAETKKAREEEMAE. The interval 325–350 is disordered; sequence EEEKREAAETKKAREEEMAEPGEKGN.

Its subcellular location is the cytoplasm. It localises to the cytoskeleton. The protein resides in the flagellum axoneme. The protein is Leucine-rich repeat-containing protein 23 (lrrc23) of Xenopus tropicalis (Western clawed frog).